The primary structure comprises 137 residues: uncharacterized protein (137 aa).

This is an uncharacterized protein from Homo sapiens (Human).